Here is a 245-residue protein sequence, read N- to C-terminus: 1-(5-phosphoribosyl)-5-[(5-phosphoribosylamino)methylideneamino] imidazole-4-carboxamide isomerase (245 aa).

Aspartate 7 serves as the catalytic Proton acceptor. Residue aspartate 129 is the Proton donor of the active site.

This sequence belongs to the HisA/HisF family.

The protein resides in the cytoplasm. It carries out the reaction 1-(5-phospho-beta-D-ribosyl)-5-[(5-phospho-beta-D-ribosylamino)methylideneamino]imidazole-4-carboxamide = 5-[(5-phospho-1-deoxy-D-ribulos-1-ylimino)methylamino]-1-(5-phospho-beta-D-ribosyl)imidazole-4-carboxamide. It participates in amino-acid biosynthesis; L-histidine biosynthesis; L-histidine from 5-phospho-alpha-D-ribose 1-diphosphate: step 4/9. In Citrobacter koseri (strain ATCC BAA-895 / CDC 4225-83 / SGSC4696), this protein is 1-(5-phosphoribosyl)-5-[(5-phosphoribosylamino)methylideneamino] imidazole-4-carboxamide isomerase.